Consider the following 95-residue polypeptide: Small ribosomal subunit protein bS21 (95 aa).

The interval 55–95 (RKLARKKMQREGLLPMKPKPVFGAGPGAGRGGPGAGARPPR) is disordered. Gly residues predominate over residues 78 to 89 (AGPGAGRGGPGA).

The protein belongs to the bacterial ribosomal protein bS21 family.

The polypeptide is Small ribosomal subunit protein bS21 (Nitrobacter hamburgensis (strain DSM 10229 / NCIMB 13809 / X14)).